The chain runs to 460 residues: GTPase Der (460 aa).

EngA-type G domains lie at Phe3–Asp167 and Ile189–Asn364. Residues Gly9 to Ser16, Asp56 to Leu60, Asn119 to Glu122, Gly195 to Ser202, Asp242 to Leu246, and Asn307 to Asp310 contribute to the GTP site. Positions Arg365–Ala449 constitute a KH-like domain.

This sequence belongs to the TRAFAC class TrmE-Era-EngA-EngB-Septin-like GTPase superfamily. EngA (Der) GTPase family. As to quaternary structure, associates with the 50S ribosomal subunit.

Functionally, GTPase that plays an essential role in the late steps of ribosome biogenesis. The chain is GTPase Der from Rhodopseudomonas palustris (strain BisA53).